Here is a 614-residue protein sequence, read N- to C-terminus: Zinc metalloproteinase-disintegrin-like protein F1 (614 aa).

Residues 1-20 (MLQVLLVTICLAVFPYQGSS) form the signal peptide. A propeptide spanning residues 21 to 192 (IILESGNVND…IKASQFILTP (172 aa)) is cleaved from the precursor. The short motif at 167 to 173 (PKKCGVT) is the Cys-switch; controls maturation element. Glu193 carries the pyrrolidone carboxylic acid (Glu) modification. A Peptidase M12B domain is found at 202–398 (KYIKLAIVVD…HTPRCILNEP (197 aa)). Residue Asn221 is glycosylated (N-linked (GlcNAc...) asparagine). Disulfide bonds link Cys313-Cys393, Cys353-Cys377, and Cys355-Cys360. Zn(2+) is bound at residue His338. Residues 338–349 (HELGHNLGINHD) carry the Metal-binding motif. Glu339 (proton acceptor) is an active-site residue. Positions 342 and 348 each coordinate Zn(2+). The 87-residue stretch at 406 to 492 (PAVCGNYVVE…ECPMDHIQKN (87 aa)) folds into the Disintegrin domain. Ca(2+) contacts are provided by Val408, Asn411, Glu415, Glu418, and Asp421. 14 cysteine pairs are disulfide-bonded: Cys409–Cys438, Cys420–Cys433, Cys422–Cys428, Cys432–Cys455, Cys446–Cys452, Cys451–Cys477, Cys464–Cys484, Cys471–Cys503, Cys496–Cys508, Cys515–Cys565, Cys530–Cys575, Cys543–Cys553, Cys560–Cys601, and Cys595–Cys607. A D/ECD-tripeptide motif is present at residues 470-472 (ECD). Residues Asp472, Glu475, and Asp487 each coordinate Ca(2+). Asn534 carries an N-linked (GlcNAc...) asparagine glycan.

Belongs to the venom metalloproteinase (M12B) family. P-III subfamily. P-IIIa sub-subfamily. Monomer. The cofactor is Zn(2+). Post-translationally, N-glycosylated. The N-terminus is blocked. Expressed by the venom gland (at protein level). Expressed by the venom gland.

The protein resides in the secreted. Its activity is regulated as follows. The alpha-fibrinogenase activity is inhibited by EDTA, but not by pefabloc. Zinc metalloprotease that has fibrinogenolytic activity. Does not have hemorrhagic activity in rats. Cleaves insulin B chain at '38-Ala-|-Leu-39' and '40-Tyr-|-Leu-41' bonds. Hydrolyzes only partially and weakly isolated extracellular matrix (ECM) bovine fibronectin and basal membrane (BM) protein human collagen IV in vitro. Murine laminin is not hydrolyzed, neither isolated nor in a solubilized BM preparation. Nidogen is hydrolyzed at '350-Ser-|-Phe-351' bond in a solubilized BM preparation. Hydrolyzes plasma proteins involved in blood coagulation in vitro. Has alpha-fibrinogenase activity cleaving human fibrinogen alpha chain at '432-Lys-|-Leu-433' bond, but does not cleave beta or gamma chains. Does not cleave fibrin. Hydrolyzes only partially bovine prothrombin at '200-Ser-|-Gly-201' bond, factor X (FX) heavy chain, and very slowly, FX light chain and plasminogen in vitro, without activating any of them. Has no effect in plasma thrombin generation. Does not inhibit platelet aggregation induced by collagen in vitro. May have a delayed pathological action as an anticoagulant in envenomed patients after they received serotherapy as it is not recognized by the venom antiserum. The sequence is that of Zinc metalloproteinase-disintegrin-like protein F1 from Vipera ammodytes ammodytes (Western sand viper).